We begin with the raw amino-acid sequence, 360 residues long: MKALILVGGYGTRLRPLTLSVPKPLVDFCNKPILLHQVEALVKAGVNHVILAVSYMSDMLEKEMKEQEKRLGIRISMSHEKEPLGTAGPLALARELLTENSDPFFVLNSDVICDFPFEEMVRFHKHHGKEGTIVVTKVEEPSKYGVVVYEAESGQIQRFVEKPQVFVSNKINSGLYIFSPAVLDRIQLRPTSIEKEIFPAMAQEGQLFAMELQGFWMDIGQPKDFLTGMCMYLQSVRQKHPEWLHVGPGFIGNVLVDPTAKIGQNCSIGPNVTIGPGVTVEDGVRIKRCTIMKGSRLHSHSWLESSIVGWSSSVGQWVRMENVTVLGEDVIVNDELYLNGANVLPHKCISESVPEPRIIM.

Residues 2–222 (KALILVGGYG…QGFWMDIGQP (221 aa)) are substrate-binding domain. Asp-110 lines the GDP-alpha-D-mannose pocket. Asp-110 is a binding site for Mg(2+). Residue Lys-162 is part of the active site. Asp-218 provides a ligand contact to GDP-alpha-D-mannose. Position 218 (Asp-218) interacts with Mg(2+). The tract at residues 245–360 (HVGPGFIGNV…ESVPEPRIIM (116 aa)) is hexapeptide repeat domain.

The protein belongs to the transferase hexapeptide repeat family. As to quaternary structure, component of the GMPPA-GMPPB mannose-1-phosphate guanylyltransferase complex composed of 4 gmppa subunits and 8 gmppb subunits; the complex is organized into three layers, a central layer made up of 2 gmppa dimers sandwiched between two layers each made up of 2 gmppb dimers. Catalytic activity of gmppb is reduced when part of the complex and binding of GDP-alpha-D-Mannose by gmppa induces allosteric feedback inhibition of gmppb. The cofactor is Mg(2+).

It carries out the reaction alpha-D-mannose 1-phosphate + GTP + H(+) = GDP-alpha-D-mannose + diphosphate. It functions in the pathway nucleotide-sugar biosynthesis; GDP-alpha-D-mannose biosynthesis; GDP-alpha-D-mannose from alpha-D-mannose 1-phosphate (GTP route): step 1/1. With respect to regulation, enzyme activity is reduced by incorporation into the GMPPA-GMPPB mannose-1-phosphate guanylyltransferase complex. Allosterically inhibited, when part of the GMPPA-GMPPB complex, by GDP-alpha-D-mannose binding to GMPPA. In terms of biological role, catalytic subunit of the GMPPA-GMPPB mannose-1-phosphate guanylyltransferase complex. Catalyzes the formation of GDP-mannose, an essential precursor of glycan moieties of glycoproteins and glycolipids. Can catalyze the reverse reaction in vitro. Together with GMPPA regulates GDP-alpha-D-mannose levels. This Xenopus tropicalis (Western clawed frog) protein is Mannose-1-phosphate guanylyltransferase catalytic subunit beta (gmppb).